Consider the following 227-residue polypeptide: Ubiquitin domain-containing protein 1 (227 aa).

Over residues 1 to 14 the composition is skewed to basic and acidic residues; it reads MGGCVGRERAETRG. Residues 1–45 are disordered; that stretch reads MGGCVGRERAETRGRGSRTQRKRGGRNEPLKKDKPKWKSDYPMTE. Residues 15–24 are compositionally biased toward basic residues; it reads RGSRTQRKRG. Residues 25-39 show a composition bias toward basic and acidic residues; that stretch reads GRNEPLKKDKPKWKS. One can recognise a Ubiquitin-like domain in the interval 150–225; sequence FQLKVRLSTG…IQVIVNQPAP (76 aa).

Its function is as follows. May be involved in the regulation of cellular senescence through a positive feedback loop with TP53. This is Ubiquitin domain-containing protein 1 (ubtd1) from Danio rerio (Zebrafish).